We begin with the raw amino-acid sequence, 401 residues long: Thermophilic serine proteinase (401 aa).

The N-terminal stretch at 1-24 is a signal peptide; sequence MKFKAIVSLSLAVSMSLFPFLVEA. Residues 25–121 constitute a propeptide that is removed on maturation; the sequence is ASNDGVESPK…AEPNYLFNAA (97 aa). Ca(2+) is bound at residue aspartate 126. One can recognise a Peptidase S8 domain in the interval 133-399; that stretch reads QYGPQNTYTD…YGRINSYNAV (267 aa). The active-site Charge relay system is the aspartate 160. Ca(2+) is bound by residues proline 168, aspartate 169, aspartate 171, aspartate 179, aspartate 184, and aspartate 186. Catalysis depends on histidine 193, which acts as the Charge relay system. Ca(2+) is bound by residues glutamate 204, asparagine 207, threonine 209, and isoleucine 211. Cysteine 258 and cysteine 260 are oxidised to a cystine. 3 residues coordinate Na(+): tyrosine 297, valine 300, and aspartate 323. Serine 347 serves as the catalytic Charge relay system.

The protein belongs to the peptidase S8 family. Ca(2+) serves as cofactor. Na(+) is required as a cofactor.

It is found in the secreted. This chain is Thermophilic serine proteinase, found in Bacillus sp. (strain AK1).